The following is a 615-amino-acid chain: Putative binding protein BruAb2_0648 (615 aa).

The first 29 residues, 1–29 (MLNRFIAFFRSVFLIGLVATAFGALPARA), serve as a signal peptide directing secretion.

It belongs to the bacterial solute-binding protein 5 family.

The protein localises to the periplasm. The polypeptide is Putative binding protein BruAb2_0648 (Brucella abortus biovar 1 (strain 9-941)).